Reading from the N-terminus, the 312-residue chain is tRNA dimethylallyltransferase (312 aa).

14–21 (GPTASGKS) provides a ligand contact to ATP. Residue 16-21 (TASGKS) participates in substrate binding. Interaction with substrate tRNA regions lie at residues 39–42 (DSSL) and 163–167 (QRLQR).

This sequence belongs to the IPP transferase family. In terms of assembly, monomer. Requires Mg(2+) as cofactor.

It catalyses the reaction adenosine(37) in tRNA + dimethylallyl diphosphate = N(6)-dimethylallyladenosine(37) in tRNA + diphosphate. In terms of biological role, catalyzes the transfer of a dimethylallyl group onto the adenine at position 37 in tRNAs that read codons beginning with uridine, leading to the formation of N6-(dimethylallyl)adenosine (i(6)A). The polypeptide is tRNA dimethylallyltransferase (Methylococcus capsulatus (strain ATCC 33009 / NCIMB 11132 / Bath)).